Consider the following 291-residue polypeptide: Segregation and condensation protein B (291 aa).

The protein belongs to the ScpB family. In terms of assembly, homodimer. Homodimerization may be required to stabilize the binding of ScpA to the Smc head domains. Component of a cohesin-like complex composed of ScpA, ScpB and the Smc homodimer, in which ScpA and ScpB bind to the head domain of Smc. The presence of the three proteins is required for the association of the complex with DNA.

The protein resides in the cytoplasm. Its function is as follows. Participates in chromosomal partition during cell division. May act via the formation of a condensin-like complex containing Smc and ScpA that pull DNA away from mid-cell into both cell halves. The polypeptide is Segregation and condensation protein B (Mycoplasmoides gallisepticum (strain R(low / passage 15 / clone 2)) (Mycoplasma gallisepticum)).